The sequence spans 669 residues: DNA mismatch repair protein MutL (669 aa).

The interval 356–377 (FEQRQNTENNQEKTFSSEESNS) is disordered. The span at 361–377 (NTENNQEKTFSSEESNS) shows a compositional bias: polar residues.

This sequence belongs to the DNA mismatch repair MutL/HexB family.

Functionally, this protein is involved in the repair of mismatches in DNA. It is required for dam-dependent methyl-directed DNA mismatch repair. May act as a 'molecular matchmaker', a protein that promotes the formation of a stable complex between two or more DNA-binding proteins in an ATP-dependent manner without itself being part of a final effector complex. The sequence is that of DNA mismatch repair protein MutL from Staphylococcus aureus (strain MSSA476).